An 89-amino-acid polypeptide reads, in one-letter code: MVMTPEKKMSIIEEYGQHEGDTGSPEVQVALLTARIEYLTEHFKSHKQDYHSRTGLLKLVGQRRNMLKYLAKKDVQRYRALIQKLGLRK.

It belongs to the universal ribosomal protein uS15 family. Part of the 30S ribosomal subunit. Forms a bridge to the 50S subunit in the 70S ribosome, contacting the 23S rRNA.

Functionally, one of the primary rRNA binding proteins, it binds directly to 16S rRNA where it helps nucleate assembly of the platform of the 30S subunit by binding and bridging several RNA helices of the 16S rRNA. Its function is as follows. Forms an intersubunit bridge (bridge B4) with the 23S rRNA of the 50S subunit in the ribosome. This Oleidesulfovibrio alaskensis (strain ATCC BAA-1058 / DSM 17464 / G20) (Desulfovibrio alaskensis) protein is Small ribosomal subunit protein uS15.